The primary structure comprises 334 residues: Phospholipase A1 2 (334 aa).

The N-terminal stretch at 1 to 23 (MMNLKYLLFFCLVQALHYCYAYG) is a signal peptide. Positions 24–33 (DPSLSNELDR) are excised as a propeptide. Residues C37 and C120 are joined by a disulfide bond. S170 acts as the Nucleophile in catalysis. D198 serves as the catalytic Charge relay system. Intrachain disulfides connect C209–C214 and C252–C261. Catalysis depends on H263, which acts as the Charge relay system. 3 disulfides stabilise this stretch: C278/C302, C279/C327, and C295/C300.

This sequence belongs to the AB hydrolase superfamily. Lipase family. Post-translationally, not glycosylated. As to expression, expressed by the venom gland.

The protein localises to the secreted. It carries out the reaction a 1,2-diacyl-sn-glycero-3-phosphocholine + H2O = a 2-acyl-sn-glycero-3-phosphocholine + a fatty acid + H(+). In terms of biological role, catalyzes the hydrolysis of phosphatidylcholine with phospholipase A1 activity (6.3 U/ml). May act as an allergen and induce hemolytic activity. The sequence is that of Phospholipase A1 2 from Vespa affinis (Lesser banded hornet).